The sequence spans 331 residues: MRVATYASHSALQILKGAKDEGFETVAFGPSRVKPLYTKYFPVADHFIEGAYPEEELLEFEAVVVPTGSFVAHLGVELVEKMKVPYYGNKAVLRWESDRSLERKWLEKAKLRLPRIYEDPDDIDGPVIVKPFGAGGGRGYFLASSPEDFWKKAERLGVRSKEDLSRVQIQEYVVGVPVYPHYFYSKLNGELELMSVDRRYESNADAIGRIPAREQIDLGISTDYTVVGNIPIVLRESLLMDVIEAGERVVKAAEELMGGLWGPFCLEGVFTPDMEFVVFEISARIVAGTNPFVHGSPYTWLRYDFPVSTGRRIAMELKQGLEEDRLGELLT.

Positions 9 and 69 each coordinate 5-amino-1-(5-phospho-beta-D-ribosyl)imidazole-4-carboxamide. The region spanning 76–322 (VELVEKMKVP…IAMELKQGLE (247 aa)) is the ATP-grasp domain. ATP is bound by residues 120 to 179 (PDDI…VPVY) and glutamate 201. Asparagine 229 provides a ligand contact to 5-amino-1-(5-phospho-beta-D-ribosyl)imidazole-4-carboxamide. Positions 267 and 280 each coordinate Mg(2+).

It belongs to the phosphohexose mutase family. Mg(2+) serves as cofactor. Requires Mn(2+) as cofactor.

The catalysed reaction is 5-amino-1-(5-phospho-beta-D-ribosyl)imidazole-4-carboxamide + formate + ATP = 5-formamido-1-(5-phospho-D-ribosyl)imidazole-4-carboxamide + ADP + phosphate. Its pathway is purine metabolism; IMP biosynthesis via de novo pathway; 5-formamido-1-(5-phospho-D-ribosyl)imidazole-4-carboxamide from 5-amino-1-(5-phospho-D-ribosyl)imidazole-4-carboxamide (formate route): step 1/1. In terms of biological role, catalyzes the ATP- and formate-dependent formylation of 5-aminoimidazole-4-carboxamide-1-beta-d-ribofuranosyl 5'-monophosphate (AICAR) to 5-formaminoimidazole-4-carboxamide-1-beta-d-ribofuranosyl 5'-monophosphate (FAICAR) in the absence of folates. The chain is 5-formaminoimidazole-4-carboxamide-1-(beta)-D-ribofuranosyl 5'-monophosphate synthetase from Thermococcus kodakarensis (strain ATCC BAA-918 / JCM 12380 / KOD1) (Pyrococcus kodakaraensis (strain KOD1)).